Consider the following 1328-residue polypeptide: WASH complex subunit 2 (1328 aa).

Residues 1–219 are sufficient for interaction with WASHC3, WASHC4 and WASHC5; required for interaction with WASHC1; that stretch reads MNRTSPDSEQ…VGSDRGSIVD (219 aa). Phosphoserine occurs at positions 157, 159, 204, 205, and 209. Over residues 201 to 213 the composition is skewed to low complexity; sequence GELSSEEGSVGSD. Disordered stretches follow at residues 201-655 and 675-830; these read GELS…KTNL and KKTQ…PKST. Composition is skewed to acidic residues over residues 219 to 231 and 248 to 273; these read DSEDEKEEEESDD and SDEEEDDDADLFADSEKEGDDIEDIE. Ser-283 is subject to Phosphoserine. Basic and acidic residues predominate over residues 288-323; the sequence is LAARIKGDVSNQRKEGHTDGKPQRTVKEKKERRTPA. A Phosphothreonine modification is found at Thr-321. The sufficient for interaction with CCDC93 stretch occupies residues 346–592; the sequence is SRGGLFSDRQ…QTSSLPPQSQ (247 aa). The interaction with VPS35 stretch occupies residues 347–1328; it reads RGGLFSDRQG…DDPLNAFGSQ (982 aa). Positions 357-367 match the LFa 1 motif; the sequence is LFDDDDESDLF. Ser-384 and Ser-387 each carry phosphoserine. 2 consecutive short sequence motifs (LFa) follow at residues 440–455 and 474–483; these read LFDDDDNDSDEDDNFF and IFDDDEGDLF. Positions 441–453 are enriched in acidic residues; it reads FDDDDNDSDEDDN. A compositionally biased stretch (polar residues) spans 508–528; it reads TITLPSSKNPKLVSETKTQKG. Short sequence motifs (LFa) lie at residues 529-540 and 564-575; these read LFSDEEDSEDLF and LFGDEDEEDNLF. Ser-531 and Ser-536 each carry phosphoserine. A compositionally biased stretch (low complexity) spans 539 to 556; it reads LFSSQSSSKTKSASVLSS. A compositionally biased stretch (polar residues) spans 582 to 592; that stretch reads KQTSSLPPQSQ. Phosphoserine occurs at positions 610 and 611. Over residues 627-638 the composition is skewed to basic and acidic residues; the sequence is ASERKSKGERWD. Short sequence motifs (LFa) lie at residues 655 to 667 and 683 to 695; these read LFEEEDDDGVDLF and LFEDDTDSGSSLF. Polar residues predominate over residues 690-699; that stretch reads SGSSLFSLPP. A phosphoserine mark is found at Ser-720, Ser-744, Ser-749, Ser-780, and Ser-795. Acidic residues predominate over residues 797-808; it reads FDEDEDKVEDDS. 2 short sequence motifs (LFa) span residues 832-840 and 849-855; these read VFQDEELLF and DPDVDLF. 2 disordered regions span residues 863-940 and 991-1088; these read LSMP…EPSS and PTLP…AMAV. Ser-867 and Ser-870 each carry phosphoserine. The short motif at 871–881 is the LFa 10 element; that stretch reads LFGDDDDDDLF. The segment covering 894 to 919 has biased composition (basic and acidic residues); the sequence is PEKKGTLRKDHKPPELTEGSKEKSTW. An interaction with phospholipids region spans residues 925-1328; that stretch reads QDSSGLTPFK…DDPLNAFGSQ (404 aa). Residues 1016–1034 show a composition bias toward basic residues; it reads NKGRVKVRGKRRPQTRAAR. The segment at 1017–1035 is required for interaction with F-actin-capping protein subunit alpha (CAPZA1 or CAPZA2 or CAPZA3); that stretch reads KGRVKVRGKRRPQTRAARR. Phosphoserine occurs at positions 1042, 1060, 1077, and 1102. Residues 1115–1210 form a disordered region; sequence AHLFDSGDIF…KKNQWKSDSH (96 aa). Short sequence motifs (LFa) lie at residues 1117–1124, 1157–1171, and 1187–1195; these read LFDSGDIF, VFPDLSEASGVDDLF, and LLEDEEDLF. 2 positions are modified to phosphoserine: Ser-1162 and Ser-1165. The segment covering 1196–1210 has biased composition (basic and acidic residues); sequence ADQKGKKNQWKSDSH. Short sequence motifs (LFa) lie at residues 1220–1226, 1249–1257, and 1277–1286; these read IFEDDIF, LFDDNIDIF, and MFDDDTDDIF. A disordered region spans residues 1289–1310; it reads GLQAKASKPKSQSAEAVSELRS. Residues 1317 to 1325 carry the LFa 17 motif; it reads IFDDPLNAF. Position 1327 is a phosphoserine (Ser-1327).

It belongs to the FAM21 family. In terms of assembly, component of the WASH core complex also described as WASH regulatory complex (SHRC) composed of WASHC1, WASHC2, WASHC3, WASHC4 and WASHC5; in the complex interacts (via N-terminus) directly with WASHC1. The WASH core complex associates with the F-actin-capping protein dimer (formed by CAPZA1, CAPZA2 or CAPZA3 and CAPZB) in a transient or substoichiometric manner which was initially described as WASH complex. Interacts with VPS35; mediates the association with the retromer CSC complex. Interacts with FKBP15. Interacts with CCDC93, CCDC22, VPS35L; indicative for an association of the WASH core complex with the CCC and retriever complexes. Directly interacts with TBC1D23.

The protein resides in the early endosome membrane. It localises to the cell membrane. In terms of biological role, acts as a component of the WASH core complex that functions as a nucleation-promoting factor (NPF) at the surface of endosomes, where it recruits and activates the Arp2/3 complex to induce actin polymerization, playing a key role in the fission of tubules that serve as transport intermediates during endosome sorting. Mediates the recruitment of the WASH core complex to endosome membranes via binding to phospholipids and VPS35 of the retromer CSC. Mediates the recruitment of the F-actin-capping protein dimer to the WASH core complex probably promoting localized F-actin polymerization needed for vesicle scission. Via its C-terminus binds various phospholipids, most strongly phosphatidylinositol 4-phosphate (PtdIns-(4)P), phosphatidylinositol 5-phosphate (PtdIns-(5)P) and phosphatidylinositol 3,5-bisphosphate (PtdIns-(3,5)P2). Involved in the endosome-to-plasma membrane trafficking and recycling of SNX27-retromer-dependent cargo proteins, such as GLUT1. Required for the association of DNAJC13, ENTR1, ANKRD50 with retromer CSC subunit VPS35. Required for the endosomal recruitment of CCC and retriever complexes subunits COMMD1 and CCDC93 as well as the retrievere complex subunit VPS35L. The protein is WASH complex subunit 2 of Rattus norvegicus (Rat).